The following is a 570-amino-acid chain: Proline--tRNA ligase (570 aa).

It belongs to the class-II aminoacyl-tRNA synthetase family. ProS type 1 subfamily. Homodimer.

The protein resides in the cytoplasm. The enzyme catalyses tRNA(Pro) + L-proline + ATP = L-prolyl-tRNA(Pro) + AMP + diphosphate. Its function is as follows. Catalyzes the attachment of proline to tRNA(Pro) in a two-step reaction: proline is first activated by ATP to form Pro-AMP and then transferred to the acceptor end of tRNA(Pro). As ProRS can inadvertently accommodate and process non-cognate amino acids such as alanine and cysteine, to avoid such errors it has two additional distinct editing activities against alanine. One activity is designated as 'pretransfer' editing and involves the tRNA(Pro)-independent hydrolysis of activated Ala-AMP. The other activity is designated 'posttransfer' editing and involves deacylation of mischarged Ala-tRNA(Pro). The misacylated Cys-tRNA(Pro) is not edited by ProRS. The chain is Proline--tRNA ligase from Clostridium acetobutylicum (strain ATCC 824 / DSM 792 / JCM 1419 / IAM 19013 / LMG 5710 / NBRC 13948 / NRRL B-527 / VKM B-1787 / 2291 / W).